A 252-amino-acid chain; its full sequence is Triosephosphate isomerase (252 aa).

10 to 12 (NWK) is a substrate binding site. The Electrophile role is filled by histidine 96. The active-site Proton acceptor is glutamate 168. Substrate contacts are provided by residues glycine 174, serine 214, and 235–236 (GG).

It belongs to the triosephosphate isomerase family. Homodimer.

It is found in the cytoplasm. The catalysed reaction is D-glyceraldehyde 3-phosphate = dihydroxyacetone phosphate. Its pathway is carbohydrate biosynthesis; gluconeogenesis. It participates in carbohydrate degradation; glycolysis; D-glyceraldehyde 3-phosphate from glycerone phosphate: step 1/1. Its function is as follows. Involved in the gluconeogenesis. Catalyzes stereospecifically the conversion of dihydroxyacetone phosphate (DHAP) to D-glyceraldehyde-3-phosphate (G3P). In Lactobacillus acidophilus (strain ATCC 700396 / NCK56 / N2 / NCFM), this protein is Triosephosphate isomerase.